Here is a 142-residue protein sequence, read N- to C-terminus: gSG7 salivary protein (142 aa).

The signal sequence occupies residues 1 to 26 (MAVRMTVILPLAMALICLMQAEPATA). Cystine bridges form between cysteine 84–cysteine 139 and cysteine 107–cysteine 117.

Associates with activated host C3-convertase complex C3bBb (C3-CFB). Interacts with host properdin (CFP), a regulator of the alternate pathway of complement. As to expression, female salivary gland (at protein level).

Its subcellular location is the secreted. Salivary protein that potently inhibits the alternative pathway of complement system activation in the host while having no inhibitory effect on the classical or lectin pathways. Binds and stabilizes activated host C3-convertase complex C3bBb (C3-CFB) and inhibits its convertase activity. Enhances accumulation of C3bBb on immobilized properdin. This Anopheles albimanus (New world malaria mosquito) protein is gSG7 salivary protein.